Here is a 415-residue protein sequence, read N- to C-terminus: Multifunctional CCA protein (415 aa).

ATP is bound by residues Gly-8 and Arg-11. CTP is bound by residues Gly-8 and Arg-11. Positions 21 and 23 each coordinate Mg(2+). Residues Arg-91, Arg-143, and Arg-146 each contribute to the ATP site. Positions 91, 143, and 146 each coordinate CTP. One can recognise an HD domain in the interval 232-333 (TGVHVMMVID…VRLLERCDAL (102 aa)).

Belongs to the tRNA nucleotidyltransferase/poly(A) polymerase family. Bacterial CCA-adding enzyme type 1 subfamily. As to quaternary structure, monomer. Can also form homodimers and oligomers. It depends on Mg(2+) as a cofactor. Requires Ni(2+) as cofactor.

It catalyses the reaction a tRNA precursor + 2 CTP + ATP = a tRNA with a 3' CCA end + 3 diphosphate. It carries out the reaction a tRNA with a 3' CCA end + 2 CTP + ATP = a tRNA with a 3' CCACCA end + 3 diphosphate. Catalyzes the addition and repair of the essential 3'-terminal CCA sequence in tRNAs without using a nucleic acid template. Adds these three nucleotides in the order of C, C, and A to the tRNA nucleotide-73, using CTP and ATP as substrates and producing inorganic pyrophosphate. tRNA 3'-terminal CCA addition is required both for tRNA processing and repair. Also involved in tRNA surveillance by mediating tandem CCA addition to generate a CCACCA at the 3' terminus of unstable tRNAs. While stable tRNAs receive only 3'-terminal CCA, unstable tRNAs are marked with CCACCA and rapidly degraded. This chain is Multifunctional CCA protein, found in Cupriavidus taiwanensis (strain DSM 17343 / BCRC 17206 / CCUG 44338 / CIP 107171 / LMG 19424 / R1) (Ralstonia taiwanensis (strain LMG 19424)).